Here is a 377-residue protein sequence, read N- to C-terminus: N5-carboxyaminoimidazole ribonucleotide synthase (377 aa).

ATP is bound by residues R93, K133, 138 to 144 (GYDGKGQ), 175 to 178 (EEFV), E183, H206, and 257 to 258 (NE). The ATP-grasp domain maps to 97–287 (KALLDNAGVR…QFENHLRAVC (191 aa)).

The protein belongs to the PurK/PurT family. Homodimer.

The catalysed reaction is 5-amino-1-(5-phospho-beta-D-ribosyl)imidazole + hydrogencarbonate + ATP = 5-carboxyamino-1-(5-phospho-D-ribosyl)imidazole + ADP + phosphate + 2 H(+). It participates in purine metabolism; IMP biosynthesis via de novo pathway; 5-amino-1-(5-phospho-D-ribosyl)imidazole-4-carboxylate from 5-amino-1-(5-phospho-D-ribosyl)imidazole (N5-CAIR route): step 1/2. Catalyzes the ATP-dependent conversion of 5-aminoimidazole ribonucleotide (AIR) and HCO(3)(-) to N5-carboxyaminoimidazole ribonucleotide (N5-CAIR). In Vibrio parahaemolyticus serotype O3:K6 (strain RIMD 2210633), this protein is N5-carboxyaminoimidazole ribonucleotide synthase.